We begin with the raw amino-acid sequence, 685 residues long: Allergen Cr-PI (685 aa).

A signal peptide spans 1–16 (MKTALVFAAVVAFVAA). N233 is a glycosylation site (N-linked (GlcNAc...) asparagine).

Belongs to the hemocyanin family.

It localises to the secreted. The protein localises to the extracellular space. Larval storage protein (LSP) which may serve as a store of amino acids for synthesis of adult proteins. In Periplaneta americana (American cockroach), this protein is Allergen Cr-PI.